We begin with the raw amino-acid sequence, 110 residues long: uncharacterized protein (110 aa).

Its subcellular location is the plastid. The protein localises to the chloroplast. This is an uncharacterized protein from Auxenochlorella pyrenoidosa (Freshwater green alga).